The sequence spans 408 residues: tRNA-specific 2-thiouridylase MnmA (408 aa).

ATP-binding positions include 27–34 and Leu-53; that span reads AMSGGVDS. Residue Cys-121 is the Nucleophile of the active site. The cysteines at positions 121 and 222 are disulfide-linked. Gly-145 lines the ATP pocket. The tract at residues 172–174 is interaction with tRNA; the sequence is RDQ. The Cysteine persulfide intermediate role is filled by Cys-222.

Belongs to the MnmA/TRMU family.

The protein localises to the cytoplasm. It catalyses the reaction S-sulfanyl-L-cysteinyl-[protein] + uridine(34) in tRNA + AH2 + ATP = 2-thiouridine(34) in tRNA + L-cysteinyl-[protein] + A + AMP + diphosphate + H(+). Catalyzes the 2-thiolation of uridine at the wobble position (U34) of tRNA, leading to the formation of s(2)U34. The chain is tRNA-specific 2-thiouridylase MnmA from Rhizobium etli (strain CIAT 652).